A 127-amino-acid chain; its full sequence is Large ribosomal subunit protein bL17 (127 aa).

It belongs to the bacterial ribosomal protein bL17 family. As to quaternary structure, part of the 50S ribosomal subunit. Contacts protein L32.

The sequence is that of Large ribosomal subunit protein bL17 from Mannheimia succiniciproducens (strain KCTC 0769BP / MBEL55E).